A 192-amino-acid chain; its full sequence is Potassium-transporting ATPase KdpC subunit (192 aa).

Residues 7–27 (PLIVLFVVLAALTGLAYPAVM) form a helical membrane-spanning segment.

Belongs to the KdpC family. As to quaternary structure, the system is composed of three essential subunits: KdpA, KdpB and KdpC.

It localises to the cell inner membrane. Part of the high-affinity ATP-driven potassium transport (or Kdp) system, which catalyzes the hydrolysis of ATP coupled with the electrogenic transport of potassium into the cytoplasm. This subunit acts as a catalytic chaperone that increases the ATP-binding affinity of the ATP-hydrolyzing subunit KdpB by the formation of a transient KdpB/KdpC/ATP ternary complex. The sequence is that of Potassium-transporting ATPase KdpC subunit from Paraburkholderia xenovorans (strain LB400).